Consider the following 294-residue polypeptide: uncharacterized protein (294 aa).

Disordered regions lie at residues 1–30 (MKRQRPQDSMISVPLQNENSTTTPTKEVSH), 51–86 (ALSDITPDTPPAFKTPYSSLPYNLVPQNSSTSKKRP), and 250–294 (DELN…STST). Composition is skewed to polar residues over residues 7 to 26 (QDSMISVPLQNENSTTTPTK), 66 to 81 (PYSSLPYNLVPQNSST), and 255 to 277 (PMNNNDTPITNSTHSAQMSNLPT).

Its subcellular location is the nucleus. This is an uncharacterized protein from Schizosaccharomyces pombe (strain 972 / ATCC 24843) (Fission yeast).